The sequence spans 364 residues: S-adenosylmethionine:tRNA ribosyltransferase-isomerase (364 aa).

Belongs to the QueA family. As to quaternary structure, monomer.

The protein resides in the cytoplasm. It catalyses the reaction 7-aminomethyl-7-carbaguanosine(34) in tRNA + S-adenosyl-L-methionine = epoxyqueuosine(34) in tRNA + adenine + L-methionine + 2 H(+). It functions in the pathway tRNA modification; tRNA-queuosine biosynthesis. Transfers and isomerizes the ribose moiety from AdoMet to the 7-aminomethyl group of 7-deazaguanine (preQ1-tRNA) to give epoxyqueuosine (oQ-tRNA). The sequence is that of S-adenosylmethionine:tRNA ribosyltransferase-isomerase from Bradyrhizobium sp. (strain ORS 278).